Reading from the N-terminus, the 141-residue chain is Arsenate reductase (141 aa).

Cys-12 functions as the Nucleophile; cysteine thioarsenate intermediate in the catalytic mechanism.

The protein belongs to the ArsC family.

The enzyme catalyses [glutaredoxin]-dithiol + arsenate + glutathione + H(+) = glutathionyl-S-S-[glutaredoxin] + arsenite + H2O. Its function is as follows. Involved in resistance to arsenate. Catalyzes the reduction of arsenate [As(V)] to arsenite [As(III)]. The sequence is that of Arsenate reductase from Escherichia coli (strain K12).